Consider the following 468-residue polypeptide: ERO1-like protein alpha (468 aa).

Positions 1–23 (MGHRWGFLIVFLGAVGLLGSGYG) are cleaved as a signal peptide. Intrachain disulfides connect cysteine 35–cysteine 48, cysteine 37–cysteine 46, cysteine 85–cysteine 391, cysteine 94–cysteine 99, cysteine 94–cysteine 131, cysteine 99–cysteine 104, cysteine 208–cysteine 241, and cysteine 394–cysteine 397. 3 positions are modified to phosphoserine: serine 106, serine 143, and serine 145. Positions 187, 189, and 200 each coordinate FAD. Residues serine 252 and histidine 255 each coordinate FAD. N-linked (GlcNAc...) asparagine glycosylation occurs at asparagine 280. Residues arginine 287 and arginine 300 each contribute to the FAD site. N-linked (GlcNAc...) asparagine glycosylation is present at asparagine 384.

Belongs to the EROs family. Predominantly monomer. May function both as a monomer and a homodimer. Interacts with PDILT. Interacts with ERP44; the interaction results in retention of ERO1A in the endoplasmic reticulum. FAD is required as a cofactor. The Cys-94/Cys-99 and Cys-394/Cys-397 disulfide bonds constitute the redox-active center. The Cys-94/Cys-99 disulfide bond may accept electron from P4HB and funnel them to the active site disulfide Cys-394/Cys-397. The regulatory Cys-99/Cys-104 disulfide bond stabilizes the other regulatory bond Cys-94/Cys-131. In terms of processing, phosphorylated on Ser-145 by FAM20C in the Golgi which increases its enzymatic activity. Phosphorylation is induced by lactation. It is also induced by hypoxia and reductive stress.

The protein localises to the endoplasmic reticulum membrane. It is found in the golgi apparatus lumen. It localises to the secreted. Its subcellular location is the cell projection. The protein resides in the dendrite. With respect to regulation, enzyme activity is tightly regulated to prevent the accumulation of reactive oxygen species in the endoplasmic reticulum. Reversibly down-regulated by the formation of disulfide bonds between the active site Cys-94 and Cys-131, and between Cys-99 and Cys-104. Glutathione may be required to regulate its activity in the endoplasmic reticulum. Functionally, oxidoreductase involved in disulfide bond formation in the endoplasmic reticulum. Efficiently reoxidizes P4HB/PDI, the enzyme catalyzing protein disulfide formation, in order to allow P4HB to sustain additional rounds of disulfide formation. Following P4HB reoxidation, passes its electrons to molecular oxygen via FAD, leading to the production of reactive oxygen species (ROS) in the cell. Required for the proper folding of immunoglobulins. Plays an important role in ER stress-induced, CHOP-dependent apoptosis by activating the inositol 1,4,5-trisphosphate receptor IP3R1. The polypeptide is ERO1-like protein alpha (Sus scrofa (Pig)).